The following is a 360-amino-acid chain: Peptide chain release factor 1 (360 aa).

Position 235 is an N5-methylglutamine (Gln-235). The disordered stretch occupies residues 281 to 310; it reads AERQRQDAAQAESRRLQVGSGDRSQRIRTY.

Belongs to the prokaryotic/mitochondrial release factor family. Methylated by PrmC. Methylation increases the termination efficiency of RF1.

It localises to the cytoplasm. Peptide chain release factor 1 directs the termination of translation in response to the peptide chain termination codons UAG and UAA. This Stenotrophomonas maltophilia (strain K279a) protein is Peptide chain release factor 1.